Consider the following 310-residue polypeptide: tRNA-cytidine(32) 2-sulfurtransferase (310 aa).

The PP-loop motif motif lies at 45 to 50; sequence SGGKDS. [4Fe-4S] cluster-binding residues include Cys-120, Cys-123, and Cys-211.

This sequence belongs to the TtcA family. As to quaternary structure, homodimer. Mg(2+) serves as cofactor. It depends on [4Fe-4S] cluster as a cofactor.

The protein localises to the cytoplasm. The enzyme catalyses cytidine(32) in tRNA + S-sulfanyl-L-cysteinyl-[cysteine desulfurase] + AH2 + ATP = 2-thiocytidine(32) in tRNA + L-cysteinyl-[cysteine desulfurase] + A + AMP + diphosphate + H(+). The protein operates within tRNA modification. In terms of biological role, catalyzes the ATP-dependent 2-thiolation of cytidine in position 32 of tRNA, to form 2-thiocytidine (s(2)C32). The sulfur atoms are provided by the cysteine/cysteine desulfurase (IscS) system. The sequence is that of tRNA-cytidine(32) 2-sulfurtransferase from Shewanella putrefaciens (strain CN-32 / ATCC BAA-453).